Reading from the N-terminus, the 311-residue chain is Ribonuclease HIII (311 aa).

Residues 95–311 form the RNase H type-2 domain; the sequence is MSIVGSDEVG…NTEKAFRLLK (217 aa). The a divalent metal cation site is built by Asp101, Glu102, and Asp206.

It belongs to the RNase HII family. RnhC subfamily. The cofactor is Mn(2+). It depends on Mg(2+) as a cofactor.

The protein resides in the cytoplasm. It carries out the reaction Endonucleolytic cleavage to 5'-phosphomonoester.. Endonuclease that specifically degrades the RNA of RNA-DNA hybrids. The sequence is that of Ribonuclease HIII from Bacillus cereus (strain ZK / E33L).